Here is a 293-residue protein sequence, read N- to C-terminus: Nucleotide-binding protein CKR_3143 (293 aa).

8-15 (GLSGAGKT) is an ATP binding site. A GTP-binding site is contributed by 59-62 (DIRG).

Belongs to the RapZ-like family.

Displays ATPase and GTPase activities. This is Nucleotide-binding protein CKR_3143 from Clostridium kluyveri (strain NBRC 12016).